Reading from the N-terminus, the 203-residue chain is Pyridoxine/pyridoxamine 5'-phosphate oxidase (203 aa).

Residues arginine 50–lysine 55, tyrosine 65–threonine 66, lysine 71, lysine 72, and glutamine 94 each bind FMN. Lysine 55 serves as a coordination point for substrate. The substrate site is built by tyrosine 112, arginine 116, and serine 120. Residues glutamine 129–serine 130 and tryptophan 174 contribute to the FMN site. Arginine 180–histidine 182 serves as a coordination point for substrate. Arginine 184 provides a ligand contact to FMN.

This sequence belongs to the pyridoxamine 5'-phosphate oxidase family. In terms of assembly, homodimer. It depends on FMN as a cofactor.

It carries out the reaction pyridoxamine 5'-phosphate + O2 + H2O = pyridoxal 5'-phosphate + H2O2 + NH4(+). It catalyses the reaction pyridoxine 5'-phosphate + O2 = pyridoxal 5'-phosphate + H2O2. It participates in cofactor metabolism; pyridoxal 5'-phosphate salvage; pyridoxal 5'-phosphate from pyridoxamine 5'-phosphate: step 1/1. Its pathway is cofactor metabolism; pyridoxal 5'-phosphate salvage; pyridoxal 5'-phosphate from pyridoxine 5'-phosphate: step 1/1. Its function is as follows. Catalyzes the oxidation of either pyridoxine 5'-phosphate (PNP) or pyridoxamine 5'-phosphate (PMP) into pyridoxal 5'-phosphate (PLP). In Brucella canis (strain ATCC 23365 / NCTC 10854 / RM-666), this protein is Pyridoxine/pyridoxamine 5'-phosphate oxidase.